Consider the following 284-residue polypeptide: D-tagatose-1,6-bisphosphate aldolase subunit GatY (284 aa).

Residue Asp-82 is the Proton donor of the active site. 2 residues coordinate Zn(2+): His-83 and His-180. Residue Gly-181 participates in dihydroxyacetone phosphate binding. Position 208 (His-208) interacts with Zn(2+). Dihydroxyacetone phosphate contacts are provided by residues 209 to 211 (GAS) and 230 to 233 (NVAT).

This sequence belongs to the class II fructose-bisphosphate aldolase family. TagBP aldolase GatY subfamily. Forms a complex with GatZ. The cofactor is Zn(2+).

The enzyme catalyses D-tagatofuranose 1,6-bisphosphate = D-glyceraldehyde 3-phosphate + dihydroxyacetone phosphate. Its pathway is carbohydrate metabolism; D-tagatose 6-phosphate degradation; D-glyceraldehyde 3-phosphate and glycerone phosphate from D-tagatose 6-phosphate: step 2/2. Its function is as follows. Catalytic subunit of the tagatose-1,6-bisphosphate aldolase GatYZ, which catalyzes the reversible aldol condensation of dihydroxyacetone phosphate (DHAP or glycerone-phosphate) with glyceraldehyde 3-phosphate (G3P) to produce tagatose 1,6-bisphosphate (TBP). Requires GatZ subunit for full activity and stability. Is involved in the catabolism of galactitol. This is D-tagatose-1,6-bisphosphate aldolase subunit GatY from Shigella dysenteriae serotype 1 (strain Sd197).